The sequence spans 114 residues: Period circadian protein (114 aa).

The tract at residues 23 to 114 (VTNTSIAGTG…VTLTESLLNK (92 aa)) is disordered. A run of 14 repeats spans residues 30 to 31 (GT), 33 to 34 (GT), 36 to 37 (GT), 38 to 39 (GT), 40 to 41 (GT), 42 to 43 (GT), 44 to 45 (GT), 46 to 47 (GT), 48 to 49 (GT), 50 to 51 (GT), 52 to 53 (GT), 54 to 55 (GT), 56 to 57 (GT), and 58 to 59 (GT). The segment covering 30–79 (GTGGTGGTGTGTGTGTGTGTGTGTGTGTGTDTGTGTGTGTETGTGTGTGT) has biased composition (gly residues). The segment at 30–87 (GTGGTGGTGTGTGTGTGTGTGTGTGTGTGTDTGTGTGTGTETGTGTGTGTRNGTNSGT) is 28 X 2 AA approximate tandem repeats of G-[TN]. One copy of the 15; approximate repeat lies at 60–61 (DT). Repeat copies occupy residues 62–63 (GT), 64–65 (GT), 66–67 (GT), and 68–69 (GT). The 20; approximate repeat unit spans residues 70–71 (ET). 4 consecutive repeat copies span residues 72–73 (GT), 74–75 (GT), 76–77 (GT), and 78–79 (GT). The 25; approximate repeat unit spans residues 80-81 (RN). Low complexity predominate over residues 80–91 (RNGTNSGTKTGT). The stretch at 82–83 (GT) is repeat 26. One copy of the 27; approximate repeat lies at 84–85 (NS). The stretch at 86-87 (GT) is repeat 28. Residues 105-114 (VTLTESLLNK) are compositionally biased toward polar residues.

As to quaternary structure, forms a heterodimer with timeless (TIM); the complex then translocates into the nucleus. Phosphorylated with a circadian rhythmicity, probably by the double-time protein (dbt). Phosphorylation could be implicated in the stability of per monomer and in the formation of heterodimer per-tim.

The protein localises to the nucleus. Its subcellular location is the cytoplasm. It localises to the perinuclear region. Functionally, essential for biological clock functions. Determines the period length of circadian and ultradian rhythms; an increase in PER dosage leads to shortened circadian rhythms and a decrease leads to lengthened circadian rhythms. Essential for the circadian rhythmicity of locomotor activity, eclosion behavior, and for the rhythmic component of the male courtship song that originates in the thoracic nervous system. The biological cycle depends on the rhythmic formation and nuclear localization of the TIM-PER complex. Light induces the degradation of TIM, which promotes elimination of PER. Nuclear activity of the heterodimer coordinatively regulates PER and TIM transcription through a negative feedback loop. Behaves as a negative element in circadian transcriptional loop. Does not appear to bind DNA, suggesting indirect transcriptional inhibition. The sequence is that of Period circadian protein (per) from Drosophila orena (Fruit fly).